The sequence spans 256 residues: Ubiquinone/menaquinone biosynthesis C-methyltransferase UbiE (256 aa).

S-adenosyl-L-methionine contacts are provided by residues Thr-79, Asp-100, and 128 to 129 (DA).

It belongs to the class I-like SAM-binding methyltransferase superfamily. MenG/UbiE family.

The enzyme catalyses a 2-demethylmenaquinol + S-adenosyl-L-methionine = a menaquinol + S-adenosyl-L-homocysteine + H(+). It catalyses the reaction a 2-methoxy-6-(all-trans-polyprenyl)benzene-1,4-diol + S-adenosyl-L-methionine = a 5-methoxy-2-methyl-3-(all-trans-polyprenyl)benzene-1,4-diol + S-adenosyl-L-homocysteine + H(+). It participates in quinol/quinone metabolism; menaquinone biosynthesis; menaquinol from 1,4-dihydroxy-2-naphthoate: step 2/2. The protein operates within cofactor biosynthesis; ubiquinone biosynthesis. Methyltransferase required for the conversion of demethylmenaquinol (DMKH2) to menaquinol (MKH2) and the conversion of 2-polyprenyl-6-methoxy-1,4-benzoquinol (DDMQH2) to 2-polyprenyl-3-methyl-6-methoxy-1,4-benzoquinol (DMQH2). This is Ubiquinone/menaquinone biosynthesis C-methyltransferase UbiE from Ectopseudomonas mendocina (strain ymp) (Pseudomonas mendocina).